We begin with the raw amino-acid sequence, 828 residues long: Protein ELFN1 (828 aa).

A signal peptide spans 1 to 27 (MAGRGWGALWVCVAAATLLHAGGLARA). At 28-418 (DCWLIEGDKG…VPSPSTATHY (391 aa)) the chain is on the extracellular side. Residue asparagine 59 is glycosylated (N-linked (GlcNAc...) asparagine). LRR repeat units lie at residues 61 to 82 (TIVD…SLSR), 85 to 106 (NLTY…AFSG), 109 to 130 (NLQV…MLRG), 133 to 154 (KLEY…SFWE), and 157 to 178 (NIVN…TFAG). Asparagine 85, asparagine 90, and asparagine 122 each carry an N-linked (GlcNAc...) asparagine glycan. An LRRCT domain is found at 190 to 252 (NPFYCSCELL…LSKLQSVCTE (63 aa)). Asparagine 210 is a glycosylation site (N-linked (GlcNAc...) asparagine). The disordered stretch occupies residues 259–291 (VVGPPRPASGRSQPGRSPPPPPPPEPSDMPCAD). The span at 274 to 285 (RSPPPPPPPEPS) shows a compositional bias: pro residues. The 88-residue stretch at 312-399 (QAEARPLIKV…HNHTCLTICL (88 aa)) folds into the Fibronectin type-III domain. One copy of the LRR 6 repeat lies at 318–342 (LIKVKQLTQNSATITVQLPSPFHRM). The N-linked (GlcNAc...) asparagine glycan is linked to asparagine 376. A helical membrane pass occupies residues 419–439 (IMTILGCLFGMVLVLGAVYYC). Over 440-828 (LRRRRRQEEK…WKGVSAQHKS (389 aa)) the chain is Cytoplasmic. Serine 461 bears the Phosphoserine mark. 3 disordered regions span residues 517 to 552 (TPKA…QSSV), 624 to 649 (LQRH…VRSP), and 696 to 732 (KGRQ…GLGR). Residues 529–541 (RTGDPPERRDCEL) show a composition bias toward basic and acidic residues. Residues 632–649 (AAGPPRASTSSSGSVRSP) show a composition bias toward low complexity. At serine 645 the chain carries Phosphoserine. A compositionally biased stretch (basic and acidic residues) spans 696–705 (KGRQYGEHRH). Pro residues predominate over residues 713–727 (AEPPAPPGPPPPPPH).

As to quaternary structure, interacts with PPP1CA.

Its subcellular location is the membrane. The protein localises to the cell projection. It is found in the dendrite. In terms of biological role, postsynaptic protein that regulates circuit dynamics in the central nervous system by modulating the temporal dynamics of interneuron recruitment. Specifically present in excitatory synapses onto oriens-lacunosum molecular (OLM) interneurons and acts as a regulator of presynaptic release probability to direct the formation of highly facilitating pyramidal-OLM synapses. Inhibits phosphatase activity of protein phosphatase 1 (PP1) complexes. In Homo sapiens (Human), this protein is Protein ELFN1 (ELFN1).